Here is a 341-residue protein sequence, read N- to C-terminus: MKALSKLKAEEGIWMTDVPQPELGHNDIMIKIRKTAICGTDVHIYNWDEWSQKTIPVPMVVGHEYVGEVVAIGQEVKGFNIGDRVSGEGHITCGHCRNCRGGRTHLCRNTVGVGVNRPGSFAEYLVIPAFNAFKIPDNISDELAAIFDPFGNAVHTALSFDLVGEDVLVSGAGPIGIMAAAVCKHVGARHVVITDVNEYRLDLARKMGVTRAVNVSKENLNDVMTELGMTEGFDVGLEMSGAPPAFRSLLNSMNHGGRIAMLGIPPSDMSIDWNQVIFKGLFIKGIYGREMFETWYKMAALIQSGLDLTPIITHRFPIDEFQQGFDAMRSGKSGKVVLSWD.

Cys-38 is a Zn(2+) binding site. Catalysis depends on charge relay system residues Thr-40 and His-43. The Zn(2+) site is built by His-63, Glu-64, Cys-93, Cys-96, Cys-99, and Cys-107. NAD(+) is bound by residues Ile-175, Asp-195, Arg-200, 262–264 (LGI), and 286–287 (IY).

The protein belongs to the zinc-containing alcohol dehydrogenase family. Homotetramer. It depends on Zn(2+) as a cofactor.

The protein localises to the cytoplasm. The catalysed reaction is L-threonine + NAD(+) = (2S)-2-amino-3-oxobutanoate + NADH + H(+). It functions in the pathway amino-acid degradation; L-threonine degradation via oxydo-reductase pathway; glycine from L-threonine: step 1/2. Catalyzes the NAD(+)-dependent oxidation of L-threonine to 2-amino-3-ketobutyrate. The sequence is that of L-threonine 3-dehydrogenase from Yersinia pseudotuberculosis serotype O:1b (strain IP 31758).